The sequence spans 107 residues: Putative ankyrin repeat protein RP714 (107 aa).

ANK repeat units lie at residues 7–36, 40–69, and 73–102; these read PPLS…DIDV, NGNS…TIDA, and ELAT…NKSA.

This is Putative ankyrin repeat protein RP714 from Rickettsia prowazekii (strain Madrid E).